Here is a 142-residue protein sequence, read N- to C-terminus: Large ribosomal subunit protein uL11 (142 aa).

The protein belongs to the universal ribosomal protein uL11 family. In terms of assembly, part of the ribosomal stalk of the 50S ribosomal subunit. Interacts with L10 and the large rRNA to form the base of the stalk. L10 forms an elongated spine to which L12 dimers bind in a sequential fashion forming a multimeric L10(L12)X complex. Post-translationally, one or more lysine residues are methylated.

Its function is as follows. Forms part of the ribosomal stalk which helps the ribosome interact with GTP-bound translation factors. This chain is Large ribosomal subunit protein uL11, found in Gamma-proteobacterium EBAC31A08.